Here is a 115-residue protein sequence, read N- to C-terminus: Large ribosomal subunit protein bL20 (115 aa).

It belongs to the bacterial ribosomal protein bL20 family.

Its function is as follows. Binds directly to 23S ribosomal RNA and is necessary for the in vitro assembly process of the 50S ribosomal subunit. It is not involved in the protein synthesizing functions of that subunit. This Malacoplasma penetrans (strain HF-2) (Mycoplasma penetrans) protein is Large ribosomal subunit protein bL20.